A 184-amino-acid polypeptide reads, in one-letter code: Photosystem I assembly protein Ycf4 (184 aa).

2 consecutive transmembrane segments (helical) span residues 22-42 (FCWA…GTSS) and 57-77 (IIFF…LFIS).

The protein belongs to the Ycf4 family.

Its subcellular location is the plastid. The protein localises to the chloroplast thylakoid membrane. Functionally, seems to be required for the assembly of the photosystem I complex. The protein is Photosystem I assembly protein Ycf4 of Arabis hirsuta (Hairy rock-cress).